The chain runs to 141 residues: Large ribosomal subunit protein uL11 (141 aa).

It belongs to the universal ribosomal protein uL11 family. As to quaternary structure, part of the ribosomal stalk of the 50S ribosomal subunit. Interacts with L10 and the large rRNA to form the base of the stalk. L10 forms an elongated spine to which L12 dimers bind in a sequential fashion forming a multimeric L10(L12)X complex. Post-translationally, one or more lysine residues are methylated.

In terms of biological role, forms part of the ribosomal stalk which helps the ribosome interact with GTP-bound translation factors. This chain is Large ribosomal subunit protein uL11, found in Chlamydia caviae (strain ATCC VR-813 / DSM 19441 / 03DC25 / GPIC) (Chlamydophila caviae).